The following is a 439-amino-acid chain: MSEFFKTVPVVKYEGADSSNPFAFKHYDANKMLMGKTMAEHLRVAVCYWHTFCWQGSDVFGANTFDRPWSKAASEMEAAKLKTDAAFEFFTKLGVPYYSFHDVDVSPEGRSIKEYINNFAQMVDVLQAKQEATGIKLLWGTANAFSNPRYMSGAASNPNPEIFAYAATQVFHAMNATKALKGENYVLWGGREGYETLLNTDLKRERAQLGRFMQMVVEHKYKIGFEGTLLIEPKPAEPTKHQYDYDTATVYGFLKEFGLEKEIKVNIEANHATLAGHSFHHEIATACSLGILGSVDANQGDAQLGWDTDQFPTSVEEYTLVTYEILKSGGFKTGGYMFDTKLRRQSMDLEDLFHGHIGAMDTLALSLERAVKMIEDEKLANIVDQRYAKWNDSLGADILAGKHTLQDLAEYAEKNNIDPQPVSGRQEMLENMVNGYIFK.

Active-site residues include His101 and Asp104. Glu232, Glu268, His271, Asp296, Asp307, Asp309, and Asp339 together coordinate Mg(2+).

Belongs to the xylose isomerase family. Homotetramer. The cofactor is Mg(2+).

The protein localises to the cytoplasm. It carries out the reaction alpha-D-xylose = alpha-D-xylulofuranose. This chain is Xylose isomerase, found in Marinomonas sp. (strain MWYL1).